Reading from the N-terminus, the 76-residue chain is Beta-defensin 121 (76 aa).

A signal peptide spans 1–15 (MKLLLLLLTVTLLLA). 3 disulfides stabilise this stretch: C23–C50, C30–C44, and C34–C51.

This sequence belongs to the beta-defensin family. Abundant expression in the male reproductive tract only.

The protein resides in the secreted. In terms of biological role, has antibacterial activity. This is Beta-defensin 121 (DEFB121) from Homo sapiens (Human).